Reading from the N-terminus, the 412-residue chain is Divalent metal cation transporter MntH (412 aa).

The Cytoplasmic portion of the chain corresponds to Met1 to Leu19. A helical membrane pass occupies residues Ala20 to Ala39. At Thr40 to Gln51 the chain is on the periplasmic side. Residues Leu52–Ala71 form a helical membrane-spanning segment. The Cytoplasmic portion of the chain corresponds to Lys72–Trp95. A helical transmembrane segment spans residues Phe96–Ile118. The Periplasmic segment spans residues Gly119–Gly125. The helical transmembrane segment at Val126 to Leu145 threads the bilayer. The Cytoplasmic portion of the chain corresponds to Gln146–Lys155. The helical transmembrane segment at Val156–Ser175 threads the bilayer. Residues Gln176–Ala196 lie on the Periplasmic side of the membrane. Residues Val197 to Thr220 traverse the membrane as a helical segment. Residues Gln221 to Asp238 lie on the Cytoplasmic side of the membrane. The chain crosses the membrane as a helical span at residues Val239–Ala258. At Ala259–Tyr276 the chain is on the periplasmic side. The helical transmembrane segment at Leu277–Ala297 threads the bilayer. Topologically, residues Ala298–Arg327 are cytoplasmic. A helical transmembrane segment spans residues Arg328 to Asp344. Topologically, residues Pro345–Val350 are periplasmic. The chain crosses the membrane as a helical span at residues Met351–Phe370. Residues Thr371–Lys387 are Cytoplasmic-facing. A helical membrane pass occupies residues Gln388–Val406. Topologically, residues Gly407–Leu412 are periplasmic.

Belongs to the NRAMP family.

It localises to the cell inner membrane. Functionally, h(+)-stimulated, divalent metal cation uptake system. This Escherichia fergusonii (strain ATCC 35469 / DSM 13698 / CCUG 18766 / IAM 14443 / JCM 21226 / LMG 7866 / NBRC 102419 / NCTC 12128 / CDC 0568-73) protein is Divalent metal cation transporter MntH.